A 2311-amino-acid chain; its full sequence is Protein Ycf2 (2311 aa).

Position 1652-1659 (1652-1659) interacts with ATP; that stretch reads GSIGTGRS.

This sequence belongs to the Ycf2 family.

It is found in the plastid. The protein resides in the chloroplast stroma. Its function is as follows. Probable ATPase of unknown function. Its presence in a non-photosynthetic plant (Epifagus virginiana) and experiments in tobacco indicate that it has an essential function which is probably not related to photosynthesis. This chain is Protein Ycf2, found in Lemna minor (Common duckweed).